The following is a 489-amino-acid chain: ATP-dependent zinc metalloprotease FtsH 3 (489 aa).

At 1–14 (MNPRPVRPGGSLQQ) the chain is on the cytoplasmic side. The helical transmembrane segment at 15-31 (SLLALGSLSVAVGLAVW) threads the bilayer. Topologically, residues 32 to 489 (QQRTLGRGRS…GPRPARPAMN (458 aa)) are extracellular. An ATP-binding site is contributed by 95 to 102 (GPPGTGKT). H315 contacts Zn(2+). Residue E316 is part of the active site. Positions 319 and 391 each coordinate Zn(2+).

This sequence in the central section; belongs to the AAA ATPase family. It in the C-terminal section; belongs to the peptidase M41 family. In terms of assembly, homohexamer. The cofactor is Zn(2+).

The protein localises to the cell membrane. Acts as a processive, ATP-dependent zinc metallopeptidase for both cytoplasmic and membrane proteins. Plays a role in the quality control of integral membrane proteins. This chain is ATP-dependent zinc metalloprotease FtsH 3, found in Sphaerobacter thermophilus (strain ATCC 49802 / DSM 20745 / KCCM 41009 / NCIMB 13125 / S 6022).